Here is an 854-residue protein sequence, read N- to C-terminus: DNA mismatch repair protein MutS (854 aa).

608-615 (GPNMAGKS) lines the ATP pocket.

It belongs to the DNA mismatch repair MutS family.

Functionally, this protein is involved in the repair of mismatches in DNA. It is possible that it carries out the mismatch recognition step. This protein has a weak ATPase activity. This Leuconostoc mesenteroides subsp. mesenteroides (strain ATCC 8293 / DSM 20343 / BCRC 11652 / CCM 1803 / JCM 6124 / NCDO 523 / NBRC 100496 / NCIMB 8023 / NCTC 12954 / NRRL B-1118 / 37Y) protein is DNA mismatch repair protein MutS.